Reading from the N-terminus, the 425-residue chain is Serine--tRNA ligase (425 aa).

233-235 (TAE) provides a ligand contact to L-serine. 264–266 (RRE) contributes to the ATP binding site. E287 serves as a coordination point for L-serine. 351–354 (EISS) contacts ATP. L-serine is bound at residue S385.

Belongs to the class-II aminoacyl-tRNA synthetase family. Type-1 seryl-tRNA synthetase subfamily. In terms of assembly, homodimer. The tRNA molecule binds across the dimer.

Its subcellular location is the cytoplasm. It carries out the reaction tRNA(Ser) + L-serine + ATP = L-seryl-tRNA(Ser) + AMP + diphosphate + H(+). The catalysed reaction is tRNA(Sec) + L-serine + ATP = L-seryl-tRNA(Sec) + AMP + diphosphate + H(+). The protein operates within aminoacyl-tRNA biosynthesis; selenocysteinyl-tRNA(Sec) biosynthesis; L-seryl-tRNA(Sec) from L-serine and tRNA(Sec): step 1/1. In terms of biological role, catalyzes the attachment of serine to tRNA(Ser). Is also able to aminoacylate tRNA(Sec) with serine, to form the misacylated tRNA L-seryl-tRNA(Sec), which will be further converted into selenocysteinyl-tRNA(Sec). The chain is Serine--tRNA ligase from Prochlorococcus marinus (strain AS9601).